A 509-amino-acid polypeptide reads, in one-letter code: MWIALLGIPILLAVLTLLLKHINKTYFILSLTKRVRTEDGSPLESKVAIMPGKTRFGNNLDILNFTPASVFNFVRESTAKAKGQNYLWYFLYAPMYNVVRPEEAEEVFQSTKLITKNVVYELIRPFLGDGLLISTDHKWHSRRKALTPAFHFNVLQSFLGIFKEECKKFLNVLEKNLDAELELNQVIPPFTLNNICETALGVKLDDMSEGNEYRKAIHAIEEVLIQRVCNPLMYYNWYFFVYGDYRKHLQNLRIVHDFSSRIIERKRQQFQQKQLGEVDEFGRKQRYAMLDTLLAAEADGQIDHQGICDEVNTFMFEGYDTTSTCLIFTLLMLALHEDVQKKCYEEVENLPEDSDDISMFQFNKLVYLECVIKESLRMFPSVPFIGRQCVEETVVNGMVMPKDTQISIHIYDIMRDPRHFPKPDLFQPDRFLPENTVNRHPFAYVPFSAGQRNCIGQKFAILEMKVLLAAVIRNFKLLPATQLEDLTFENGIVLRTQENIKVKLSKRVK.

The heme site is built by Glu317 and Cys454.

This sequence belongs to the cytochrome P450 family. It depends on heme as a cofactor.

The protein localises to the endoplasmic reticulum membrane. The protein resides in the microsome membrane. Its function is as follows. May be involved in the metabolism of insect hormones and in the breakdown of synthetic insecticides. This chain is Probable cytochrome P450 4ac1 (Cyp4ac1), found in Drosophila melanogaster (Fruit fly).